A 136-amino-acid chain; its full sequence is ATP synthase epsilon chain (136 aa).

Positions 104–136 are disordered; the sequence is AGMEGQPASPEKVKAQQQLNEARARMQASKSAD.

It belongs to the ATPase epsilon chain family. F-type ATPases have 2 components, CF(1) - the catalytic core - and CF(0) - the membrane proton channel. CF(1) has five subunits: alpha(3), beta(3), gamma(1), delta(1), epsilon(1). CF(0) has three main subunits: a, b and c.

The protein resides in the cellular thylakoid membrane. In terms of biological role, produces ATP from ADP in the presence of a proton gradient across the membrane. In Synechococcus sp. (strain CC9902), this protein is ATP synthase epsilon chain.